Consider the following 108-residue polypeptide: DNA-binding protein HBbu (108 aa).

Belongs to the bacterial histone-like protein family.

Its function is as follows. Histone-like DNA-binding protein which is capable of wrapping DNA to stabilize it, and thus to prevent its denaturation under extreme environmental conditions. In Borrelia turicatae, this protein is DNA-binding protein HBbu (hbb).